The sequence spans 313 residues: PDCD10 and GCKIII kinases-associated protein 1 (313 aa).

The disordered stretch occupies residues 40-89; that stretch reads RLKGTQNSEVEVPRNALHDGSLSNSESRGSTTGLPHQGPLPQEDSEERPC. 2 positions are modified to phosphoserine: serine 60 and serine 64. Positions 60–73 are enriched in polar residues; the sequence is SLSNSESRGSTTGL. Phosphothreonine is present on threonine 104. Residues serine 107, serine 237, and serine 240 each carry the phosphoserine modification. The interval 253–286 is disordered; the sequence is YFKEEGPTHPTPAADSGSEREDPHTYNGDREGVV. Over residues 269-285 the composition is skewed to basic and acidic residues; sequence GSEREDPHTYNGDREGV.

In terms of assembly, interacts with KEAP1; this interaction prevents the ubiquitination of KEAP1 by TRIM25, thus protecting KEAP1 from degradation. Found in association with PDCD10 and members of the STE20 kinases, such as STK24, STK25 and STK26.

It is found in the cell membrane. In terms of biological role, acts as a tumor suppressor. Acts as a tumor suppressor for colorectal cancer cell proliferation by targeting KEAP1/USP17/ELK1/CDK6 axis. This Mus musculus (Mouse) protein is PDCD10 and GCKIII kinases-associated protein 1.